A 144-amino-acid chain; its full sequence is Deoxyuridine 5'-triphosphate nucleotidohydrolase (144 aa).

Substrate contacts are provided by residues R63–G65, N76, and T80–D82.

Belongs to the dUTPase family. The cofactor is Mg(2+).

The enzyme catalyses dUTP + H2O = dUMP + diphosphate + H(+). The protein operates within pyrimidine metabolism; dUMP biosynthesis; dUMP from dCTP (dUTP route): step 2/2. This enzyme is involved in nucleotide metabolism: it produces dUMP, the immediate precursor of thymidine nucleotides and it decreases the intracellular concentration of dUTP so that uracil cannot be incorporated into DNA. This is Deoxyuridine 5'-triphosphate nucleotidohydrolase from Bacteroides thetaiotaomicron (strain ATCC 29148 / DSM 2079 / JCM 5827 / CCUG 10774 / NCTC 10582 / VPI-5482 / E50).